Here is an 85-residue protein sequence, read N- to C-terminus: V-type proton ATPase subunit f (85 aa).

The Lumenal portion of the chain corresponds to 1 to 10 (MRPVVSTGKA). The chain crosses the membrane as a helical span at residues 11–31 (WCCTVLSAFGVVILSVIAHLF). The Cytoplasmic segment spans residues 32 to 54 (NTNHESFVGSINDPEDGPAVAHT). A helical transmembrane segment spans residues 55–75 (VYLAALVYLVFFVFCGFQVYL). At 76–85 (ARRKPSIELR) the chain is on the lumenal side.

In terms of assembly, V-ATPase is a heteromultimeric enzyme composed of a peripheral catalytic V1 complex (components A to H) attached to an integral membrane V0 proton pore complex (components: a, c, c', c'', d, e, f and VOA1).

The protein resides in the endoplasmic reticulum membrane. Its subcellular location is the vacuole membrane. In terms of biological role, accessory component of the V0 complex of vacuolar(H+)-ATPase (V-ATPase), a multisubunit enzyme composed of a peripheral complex (V1) that hydrolyzes ATP and a membrane integral complex (V0) that translocates protons. V-ATPase is responsible for acidifying and maintaining the pH of intracellular compartments. This Saccharomyces cerevisiae (strain ATCC 204508 / S288c) (Baker's yeast) protein is V-type proton ATPase subunit f.